Consider the following 378-residue polypeptide: Acetylornithine deacetylase (378 aa).

Zn(2+) is bound at residue H76. D78 is an active-site residue. D108 contributes to the Zn(2+) binding site. The active site involves E140. The Zn(2+) site is built by E141, E165, and H351.

Belongs to the peptidase M20A family. ArgE subfamily. As to quaternary structure, homodimer. Requires Zn(2+) as cofactor. The cofactor is Co(2+). Glutathione serves as cofactor.

It is found in the cytoplasm. It carries out the reaction N(2)-acetyl-L-ornithine + H2O = L-ornithine + acetate. The protein operates within amino-acid biosynthesis; L-arginine biosynthesis; L-ornithine from N(2)-acetyl-L-ornithine (linear): step 1/1. Catalyzes the hydrolysis of the amide bond of N(2)-acetylated L-amino acids. Cleaves the acetyl group from N-acetyl-L-ornithine to form L-ornithine, an intermediate in L-arginine biosynthesis pathway, and a branchpoint in the synthesis of polyamines. This chain is Acetylornithine deacetylase, found in Aliivibrio fischeri (strain ATCC 700601 / ES114) (Vibrio fischeri).